The sequence spans 990 residues: Presequence protease, mitochondrial (990 aa).

A mitochondrion-targeting transit peptide spans 1–25 (MLRLKSLKKPVQAVVRRFATTSAPT). His-89 lines the Zn(2+) pocket. Glu-92 functions as the Proton acceptor in the catalytic mechanism. His-93 lines the Zn(2+) pocket. Glu-165 is a catalytic residue. Glu-190 contributes to the Zn(2+) binding site.

The protein belongs to the peptidase M16 family. PreP subfamily. As to quaternary structure, monomer and homodimer; homodimerization is induced by binding of the substrate. Requires Zn(2+) as cofactor.

The protein localises to the mitochondrion intermembrane space. It localises to the mitochondrion matrix. Functionally, degrades mitochondrial transit peptides after their cleavage in the intermembrane space or in the matrix, and presequence peptides; clearance of these peptides is required to keep the presequence processing machinery running. Preferentially cleaves the N-terminal side of paired basic amino acid residues. Also degrades other unstructured peptides. May function as an ATP-dependent peptidase as opposed to a metalloendopeptidase. The polypeptide is Presequence protease, mitochondrial (CYM1) (Yarrowia lipolytica (strain CLIB 122 / E 150) (Yeast)).